Here is a 456-residue protein sequence, read N- to C-terminus: Bestrophin homolog 18 (456 aa).

The next 4 helical transmembrane spans lie at Trp-29 to Ile-49, Gly-83 to Ile-103, Ile-234 to Ala-254, and Met-267 to Leu-287. A disordered region spans residues Ala-416–Lys-456.

It belongs to the anion channel-forming bestrophin (TC 1.A.46) family. Calcium-sensitive chloride channel subfamily. In terms of assembly, forms oligomers.

It localises to the cell membrane. Functionally, forms chloride channels. The polypeptide is Bestrophin homolog 18 (best-18) (Caenorhabditis elegans).